The primary structure comprises 66 residues: MPKIKTRKAAAKRFRLTGSGKFMRRRAGHNHLLEHKTSKRKRKLAGVALVDKRDVVNVRLMLPNTH.

The protein belongs to the bacterial ribosomal protein bL35 family.

The chain is Large ribosomal subunit protein bL35 from Synechococcus sp. (strain JA-2-3B'a(2-13)) (Cyanobacteria bacterium Yellowstone B-Prime).